A 269-amino-acid polypeptide reads, in one-letter code: Mediator of RNA polymerase II transcription subunit 8 (269 aa).

The interval 187 to 217 is disordered; it reads RVLEDDDEEDESDSEEGEGEADEMEVVGARR. Residues 190–211 are compositionally biased toward acidic residues; that stretch reads EDDDEEDESDSEEGEGEADEME.

The protein belongs to the Mediator complex subunit 8 family. Component of the Mediator complex.

It localises to the nucleus. Its function is as follows. Component of the Mediator complex, a coactivator involved in the regulated transcription of nearly all RNA polymerase II-dependent genes. Mediator functions as a bridge to convey information from gene-specific regulatory proteins to the basal RNA polymerase II transcription machinery. Mediator is recruited to promoters by direct interactions with regulatory proteins and serves as a scaffold for the assembly of a functional preinitiation complex with RNA polymerase II and the general transcription factors. The protein is Mediator of RNA polymerase II transcription subunit 8 (med8) of Aspergillus niger (strain ATCC MYA-4892 / CBS 513.88 / FGSC A1513).